We begin with the raw amino-acid sequence, 885 residues long: MQERYQPNSVEAAAQQTWQARDAYLVHEHAKNPDGSEKPKFYACSMLPYPSGKLHMGHVRNYTINDMMARQLRMRGYNVLMPMGWDAFGMPAENAAIKSKVPPAKWTYDNIAYMKKQMKAMGLAIDWSREMCACDPKYYKWNQWLFLKMLEKGIAYRKTQVVNWDPVDQTVLANEQVIDGRGWRSGAPVEKREIPGYYLRITDYAEELLDQVSTNLPGWPERVRLMQENWIGKSEGLRFAFPHRIAGADGKLIQDGKLYVFTTRADTIMGVTFCAVAPEHPLATHAAQSNPALAAFVEQCKLGGTTEAEMATREKEGMPTGLTVTHPLTGAEIDVWVGNYVLMTYGDGAVMGVPAHDERDFAFARKYGLPIRQVVALEGKTYSTDAWQEWYGDKQAGRTVNSGKYDGLAYQAAVDAIAADLAAQGVGEKQTTWRLRDWGISRQRYWGTPIPIIHCADCGPVPVPEQDLPVVLPDDLIPDGSGNPLAKNEAFLSCSCPRCGKPARRETDTMDTFVDSSWYFMRYTSPDNDQAMVDARNDYWMPMDQYIGGIEHAVLHLLYARFWTKVMRDLGLLNFDEPFTKLLCQGMVLNHIYSRKTPQGGIEYFWPEEVDNVYDAKGAIVGAKLQRDGSEVNYGGVGTMSKSKNNGVDPQSLIDTLGADTARLFVMFASPPEQTLEWSDSGVEGANRFLRRLWALGYAQREAVGRGLATGADWAQAPAPVKELRREVYGLLKQADYDYQRIQYNTVVSACMKMLNAIDDAPLPEGPAADAARAETLGLLLRVLYPVVPHITWHLWQDLGYAEHLGDLLDAPWPHVDEAALVADEIELMLQVNGKLRGSIRVAAKAPKEDIERIAAAQEEVARFLEGRPPKRVIVVPGKLVNVVG.

The 'HIGH' region motif lies at 48-58 (PYPSGKLHMGH). The short motif at 639-643 (TMSKS) is the 'KMSKS' region element. ATP is bound at residue lysine 642.

Belongs to the class-I aminoacyl-tRNA synthetase family.

Its subcellular location is the cytoplasm. It carries out the reaction tRNA(Leu) + L-leucine + ATP = L-leucyl-tRNA(Leu) + AMP + diphosphate. The sequence is that of Leucine--tRNA ligase from Bordetella pertussis (strain Tohama I / ATCC BAA-589 / NCTC 13251).